Consider the following 142-residue polypeptide: uncharacterized protein (142 aa).

The segment covering 1–14 (MKNVSPRRNKHYKS) has biased composition (basic residues). Residues 1-40 (MKNVSPRRNKHYKSYKPQVPLKKPVLLPQHPPYRNRRKKK) form a disordered region. The span at 16–28 (KPQVPLKKPVLLP) shows a compositional bias: low complexity.

This is an uncharacterized protein from Aquifex aeolicus (strain VF5).